The sequence spans 340 residues: Beta-ketoacyl-[acyl-carrier-protein] synthase III (340 aa).

Catalysis depends on residues C119 and H260. The interval 261-265 (QANYR) is ACP-binding. Residue N290 is part of the active site.

Belongs to the thiolase-like superfamily. FabH family. In terms of assembly, homodimer.

The protein resides in the cytoplasm. It carries out the reaction malonyl-[ACP] + acetyl-CoA + H(+) = 3-oxobutanoyl-[ACP] + CO2 + CoA. The protein operates within lipid metabolism; fatty acid biosynthesis. Its function is as follows. Catalyzes the condensation reaction of fatty acid synthesis by the addition to an acyl acceptor of two carbons from malonyl-ACP. Catalyzes the first condensation reaction which initiates fatty acid synthesis and may therefore play a role in governing the total rate of fatty acid production. Possesses both acetoacetyl-ACP synthase and acetyl transacylase activities. Its substrate specificity determines the biosynthesis of branched-chain and/or straight-chain of fatty acids. The chain is Beta-ketoacyl-[acyl-carrier-protein] synthase III from Sulfurovum sp. (strain NBC37-1).